Here is a 217-residue protein sequence, read N- to C-terminus: Probable transaldolase (217 aa).

Lysine 85 acts as the Schiff-base intermediate with substrate in catalysis.

The protein belongs to the transaldolase family. Type 3B subfamily.

Its subcellular location is the cytoplasm. It catalyses the reaction D-sedoheptulose 7-phosphate + D-glyceraldehyde 3-phosphate = D-erythrose 4-phosphate + beta-D-fructose 6-phosphate. Its pathway is carbohydrate degradation; pentose phosphate pathway; D-glyceraldehyde 3-phosphate and beta-D-fructose 6-phosphate from D-ribose 5-phosphate and D-xylulose 5-phosphate (non-oxidative stage): step 2/3. In terms of biological role, transaldolase is important for the balance of metabolites in the pentose-phosphate pathway. This Agathobacter rectalis (strain ATCC 33656 / DSM 3377 / JCM 17463 / KCTC 5835 / VPI 0990) (Eubacterium rectale) protein is Probable transaldolase.